A 119-amino-acid chain; its full sequence is Small ribosomal subunit protein uS13 (119 aa).

Residues 90-119 form a disordered region; sequence IRHRRGLPLRGQRTRSNARTRKGKRKPIRS. Residues 91-119 show a composition bias toward basic residues; it reads RHRRGLPLRGQRTRSNARTRKGKRKPIRS.

It belongs to the universal ribosomal protein uS13 family. As to quaternary structure, part of the 30S ribosomal subunit. Forms a loose heterodimer with protein S19. Forms two bridges to the 50S subunit in the 70S ribosome.

Functionally, located at the top of the head of the 30S subunit, it contacts several helices of the 16S rRNA. In the 70S ribosome it contacts the 23S rRNA (bridge B1a) and protein L5 of the 50S subunit (bridge B1b), connecting the 2 subunits; these bridges are implicated in subunit movement. Contacts the tRNAs in the A and P-sites. This chain is Small ribosomal subunit protein uS13, found in Coxiella burnetii (strain CbuK_Q154) (Coxiella burnetii (strain Q154)).